The following is a 138-amino-acid chain: Small ribosomal subunit protein uS11c (138 aa).

The interval 1–22 (MAKSIPRISSRRNGPIGSGKTV) is disordered.

This sequence belongs to the universal ribosomal protein uS11 family. In terms of assembly, part of the 30S ribosomal subunit.

It localises to the plastid. This Cuscuta exaltata (Tall dodder) protein is Small ribosomal subunit protein uS11c.